The chain runs to 152 residues: Deoxyuridine 5'-triphosphate nucleotidohydrolase (152 aa).

Substrate-binding positions include 70-72 (RSG), Asn83, 87-89 (TID), and Lys97.

The protein belongs to the dUTPase family. Requires Mg(2+) as cofactor.

It carries out the reaction dUTP + H2O = dUMP + diphosphate + H(+). It functions in the pathway pyrimidine metabolism; dUMP biosynthesis; dUMP from dCTP (dUTP route): step 2/2. This enzyme is involved in nucleotide metabolism: it produces dUMP, the immediate precursor of thymidine nucleotides and it decreases the intracellular concentration of dUTP so that uracil cannot be incorporated into DNA. This Corynebacterium diphtheriae (strain ATCC 700971 / NCTC 13129 / Biotype gravis) protein is Deoxyuridine 5'-triphosphate nucleotidohydrolase.